Here is a 255-residue protein sequence, read N- to C-terminus: Hydroxyacylglutathione hydrolase (255 aa).

Positions 56, 58, 60, 61, 114, 133, and 171 each coordinate Zn(2+).

This sequence belongs to the metallo-beta-lactamase superfamily. Glyoxalase II family. In terms of assembly, monomer. It depends on Zn(2+) as a cofactor.

The catalysed reaction is an S-(2-hydroxyacyl)glutathione + H2O = a 2-hydroxy carboxylate + glutathione + H(+). It participates in secondary metabolite metabolism; methylglyoxal degradation; (R)-lactate from methylglyoxal: step 2/2. In terms of biological role, thiolesterase that catalyzes the hydrolysis of S-D-lactoyl-glutathione to form glutathione and D-lactic acid. In Rhodopseudomonas palustris (strain HaA2), this protein is Hydroxyacylglutathione hydrolase.